Here is a 160-residue protein sequence, read N- to C-terminus: MKRAADYIEMKSPAKPEYVGIIRLTLSGIASKMGYSYDDIEDLKIAVSEACTNAVQHAYKADKTGEVSVRFGVFEDRLEIIVADQGDSFDIHDKQKGLGPYSPEHTVDQLSEGGLGLYLMETLMDEVRVQIDSGVTVSMTKFLNRERVDDGTTVQNYETN.

Belongs to the anti-sigma-factor family.

The enzyme catalyses L-seryl-[protein] + ATP = O-phospho-L-seryl-[protein] + ADP + H(+). It carries out the reaction L-threonyl-[protein] + ATP = O-phospho-L-threonyl-[protein] + ADP + H(+). Negative regulator of sigma-B activity. Phosphorylates and inactivates its specific antagonist protein, RsbV. Upon phosphorylation of RsbV, RsbW is released and binds to sigma-B, thereby blocking its ability to form an RNA polymerase holoenzyme (E-sigma-B). The chain is Serine-protein kinase RsbW from Bacillus licheniformis.